We begin with the raw amino-acid sequence, 882 residues long: DNA mismatch repair protein MutS (882 aa).

627 to 634 (GPNMAGKS) serves as a coordination point for ATP.

Belongs to the DNA mismatch repair MutS family.

Its function is as follows. This protein is involved in the repair of mismatches in DNA. It is possible that it carries out the mismatch recognition step. This protein has a weak ATPase activity. The chain is DNA mismatch repair protein MutS from Anaeromyxobacter dehalogenans (strain 2CP-1 / ATCC BAA-258).